The following is a 315-amino-acid chain: Cytochrome c biogenesis protein CcsA (315 aa).

8 consecutive transmembrane segments (helical) span residues 15-35 (SCFL…GFGG), 39-59 (FSFT…LQLI), 73-93 (LYES…YIEV), 97-117 (TLFL…FTDF), 144-164 (VMIA…AYLV), 222-242 (TIGI…IWAN), 257-277 (WAFI…VGGW), and 283-303 (ALVA…VNLL).

It belongs to the CcmF/CycK/Ccl1/NrfE/CcsA family. In terms of assembly, may interact with Ccs1.

The protein localises to the plastid. It is found in the chloroplast thylakoid membrane. Functionally, required during biogenesis of c-type cytochromes (cytochrome c6 and cytochrome f) at the step of heme attachment. The chain is Cytochrome c biogenesis protein CcsA from Chlorella vulgaris (Green alga).